A 105-amino-acid polypeptide reads, in one-letter code: UPF0060 membrane protein Ajs_1326 (105 aa).

Transmembrane regions (helical) follow at residues 4 to 24 (FALF…PYLW), 30 to 50 (SAWL…LLTL), 60 to 80 (AAYG…VDGI), and 82 to 102 (PTAW…LIMF).

Belongs to the UPF0060 family.

The protein localises to the cell inner membrane. This is UPF0060 membrane protein Ajs_1326 from Acidovorax sp. (strain JS42).